An 830-amino-acid chain; its full sequence is Leucine--tRNA ligase (830 aa).

The 'HIGH' region signature appears at proline 42–histidine 52. A 'KMSKS' region motif is present at residues lysine 585–serine 589. ATP is bound at residue lysine 588.

This sequence belongs to the class-I aminoacyl-tRNA synthetase family.

The protein localises to the cytoplasm. The catalysed reaction is tRNA(Leu) + L-leucine + ATP = L-leucyl-tRNA(Leu) + AMP + diphosphate. The protein is Leucine--tRNA ligase of Halothermothrix orenii (strain H 168 / OCM 544 / DSM 9562).